The following is a 514-amino-acid chain: Glutamate--cysteine ligase (514 aa).

Belongs to the glutamate--cysteine ligase type 1 family. Type 1 subfamily.

It catalyses the reaction L-cysteine + L-glutamate + ATP = gamma-L-glutamyl-L-cysteine + ADP + phosphate + H(+). Its pathway is sulfur metabolism; glutathione biosynthesis; glutathione from L-cysteine and L-glutamate: step 1/2. This Enterobacter sp. (strain 638) protein is Glutamate--cysteine ligase.